We begin with the raw amino-acid sequence, 234 residues long: MAKLTKRMRVIREKVDATKQYDINEAVALLQELATAKFVESVDVAVNLGIDARKSDQNVRGATVLPHGTGRTVRVAVFTQGPNAEAAKAAGADLVGMEDLADQIKKGEMNFDVVIASPDAMRVVGQLGQILGPRGLMPNPKVGTVTPNVAEAVKNAKAGQVRYRNDKNGIIHSTIGKASFSAEQLKENLEALMVALKKAKPATAKGVYIKKVCLSTTMGAGVTIDQATLSAVAN.

Belongs to the universal ribosomal protein uL1 family. Part of the 50S ribosomal subunit.

Its function is as follows. Binds directly to 23S rRNA. The L1 stalk is quite mobile in the ribosome, and is involved in E site tRNA release. In terms of biological role, protein L1 is also a translational repressor protein, it controls the translation of the L11 operon by binding to its mRNA. This is Large ribosomal subunit protein uL1 from Edwardsiella ictaluri (strain 93-146).